We begin with the raw amino-acid sequence, 422 residues long: Acylglycerol kinase, mitochondrial (422 aa).

The residue at position 6 (Lys-6) is an N6-acetyllysine. The segment at 15–31 (TTAGLCLLTWGGHWLYG) is hydrophobic. The DAGKc domain occupies 58 to 199 (AQVKKATVFL…LDVLQIKGEK (142 aa)). Residues 249 to 271 (QASISYTGPTERPPNEPEETPVQ) form a disordered region.

Belongs to the AGK family. Component of the TIM22 complex, which core is composed of TIMM22, associated with TIMM10 (TIMM10A and/or TIMM10B), TIMM9, AGK and TIMM29. Interacts with SMIM26. Mg(2+) serves as cofactor. In terms of tissue distribution, highly expressed in muscle, heart, kidney and brain.

The protein resides in the mitochondrion inner membrane. It localises to the mitochondrion intermembrane space. It carries out the reaction a monoacylglycerol + ATP = a monoacyl-sn-glycero-3-phosphate + ADP + H(+). The enzyme catalyses a 1,2-diacyl-sn-glycerol + ATP = a 1,2-diacyl-sn-glycero-3-phosphate + ADP + H(+). The catalysed reaction is an N-acylsphing-4-enine + ATP = an N-acylsphing-4-enine 1-phosphate + ADP + H(+). It catalyses the reaction 1-(9Z-octadecenoyl)-sn-glycerol + ATP = 1-(9Z-octadecenoyl)-sn-glycero-3-phosphate + ADP + H(+). It carries out the reaction 1,2-di-(9Z-octadecenoyl)-sn-glycerol + ATP = 1,2-di-(9Z-octadecenoyl)-sn-glycero-3-phosphate + ADP + H(+). The enzyme catalyses a 1-acyl-sn-glycerol + ATP = a 1-acyl-sn-glycero-3-phosphate + ADP + H(+). The catalysed reaction is 1-hexadecanoyl-sn-glycerol + ATP = 1-hexadecanoyl-sn-glycero-3-phosphate + ADP + H(+). It catalyses the reaction a 2-acylglycerol + ATP = a 2-acyl-sn-glycerol 3-phosphate + ADP + H(+). It carries out the reaction 2-(5Z,8Z,11Z,14Z-eicosatetraenoyl)-glycerol + ATP = 2-(5Z,8Z,11Z,14Z-eicosatetraenoyl)-sn-glycero-3-phosphate + ADP + H(+). The enzyme catalyses 1-(5Z,8Z,11Z,14Z-eicosatetraenoyl)-sn-glycerol + ATP = 1-(5Z,8Z,11Z,14Z-eicosatetraenoyl)-sn-glycero-3-phosphate + ADP + H(+). The catalysed reaction is N-(hexanoyl)sphing-4-enine + ATP = N-hexanoylsphing-4-enine 1-phosphate + ADP + H(+). The protein operates within lipid metabolism; glycerolipid metabolism. Its function is as follows. Lipid kinase that can phosphorylate both monoacylglycerol and diacylglycerol to form lysophosphatidic acid (LPA) and phosphatidic acid (PA), respectively. Does not phosphorylate sphingosine. Phosphorylates ceramide. Phosphorylates 1,2-dioleoylglycerol more rapidly than 2,3-dioleoylglycerol. Independently of its lipid kinase activity, acts as a component of the TIM22 complex. The TIM22 complex mediates the import and insertion of multi-pass transmembrane proteins into the mitochondrial inner membrane by forming a twin-pore translocase that uses the membrane potential as the external driving force. In the TIM22 complex, required for the import of a subset of metabolite carriers into mitochondria, such as ANT1/SLC25A4 and SLC25A24, while it is not required for the import of TIMM23. Overexpression increases the formation and secretion of LPA, resulting in transactivation of EGFR and activation of the downstream MAPK signaling pathway, leading to increased cell growth. The polypeptide is Acylglycerol kinase, mitochondrial (Homo sapiens (Human)).